A 345-amino-acid chain; its full sequence is Nicotinate-nucleotide--dimethylbenzimidazole phosphoribosyltransferase (345 aa).

Glutamate 312 acts as the Proton acceptor in catalysis.

The protein belongs to the CobT family.

The enzyme catalyses 5,6-dimethylbenzimidazole + nicotinate beta-D-ribonucleotide = alpha-ribazole 5'-phosphate + nicotinate + H(+). Its pathway is nucleoside biosynthesis; alpha-ribazole biosynthesis; alpha-ribazole from 5,6-dimethylbenzimidazole: step 1/2. Functionally, catalyzes the synthesis of alpha-ribazole-5'-phosphate from nicotinate mononucleotide (NAMN) and 5,6-dimethylbenzimidazole (DMB). This chain is Nicotinate-nucleotide--dimethylbenzimidazole phosphoribosyltransferase, found in Bacteroides fragilis (strain YCH46).